A 241-amino-acid polypeptide reads, in one-letter code: Small ribosomal subunit protein uS2 (241 aa).

The protein belongs to the universal ribosomal protein uS2 family.

In Klebsiella pneumoniae subsp. pneumoniae (strain ATCC 700721 / MGH 78578), this protein is Small ribosomal subunit protein uS2.